A 495-amino-acid polypeptide reads, in one-letter code: Regulator of G-protein signaling 7 (495 aa).

The 76-residue stretch at 37 to 112 (EKNGIPIRTV…DDGTFYRFQT (76 aa)) folds into the DEP domain. A phosphoserine mark is found at Ser-229 and Ser-241. A disordered region spans residues 235-256 (NDIRSHSPTHTPTPETKPPTED). Position 243 is a phosphothreonine (Thr-243). One can recognise a G protein gamma domain in the interval 255–316 (EDELQQQIKY…LSDDTTFWEL (62 aa)). An RGS domain is found at 333 to 448 (GMDEALKDPV…IRSSAYQELL (116 aa)). Ser-434 is subject to Phosphoserine.

Interacts with GNB5, forming the RGS7-GNB5 complex. Interacts with GPR158; promotes the GTPase activator activity of the RGS7-GNB5 complex in absence of glycine, in contrast GTPase activator activity of the RGS7-GNB5 complex is inhibited in presence of glycine. Interacts with GPR179. Interacts with PKD1; this prevents rapid proteasomal degradation. Interacts with RGS7BP, leading to regulate the subcellular location of the heterodimer formed with GNB5. Interacts (phosphorylated form) with 14-3-3 protein YWHAQ. Interacts with SNAPIN. Interacts with GNAI1. Interacts with GNAO1, GNAI3 and GNAZ. In terms of processing, palmitoylated. Ubiquitinated, leading to rapid proteasomal degradation. Post-translationally, phosphorylation and subsequent interaction with 14-3-3 proteins inhibits GAP activity.

It localises to the cytoplasm. It is found in the cytosol. The protein resides in the cell membrane. Its subcellular location is the membrane. In terms of biological role, GTPase activator component of the RGS7-GNB5 complex that regulates G protein-coupled receptor signaling cascades. The RGS7-GNB5 complex acts as an inhibitor signal transduction by promoting the GTPase activity of G protein alpha subunits, such as GNAO1, thereby driving them into their inactive GDP-bound form. May play a role in synaptic vesicle exocytosis. Glycine-dependent regulation of the RGS7-GNB5 complex by GPR158 affects mood and cognition via its ability to regulate neuronal excitability in L2/L3 pyramidal neurons of the prefrontal cortex. Modulates the activity of potassium channels that are activated by GNAO1 in response to muscarinic acetylcholine receptor M2/CHRM2 signaling. The chain is Regulator of G-protein signaling 7 (RGS7) from Homo sapiens (Human).